Consider the following 419-residue polypeptide: Protein arginine N-methyltransferase 8-B (419 aa).

The segment covering 1 to 14 (MGLRHSSRCLLLRR) has biased composition (basic residues). The interval 1–79 (MGLRHSSRCL…HTPHVSALSA (79 aa)) is disordered. A lipid anchor (N-myristoyl glycine) is attached at G2. Low complexity predominate over residues 33–63 (QHQQQQSISSIPSSQSLQPSPLPKPVTSVHH). An Omega-N-methylarginine modification is found at R83. The residue at position 98 (R98) is an Asymmetric dimethylarginine. Residues 98–402 (RDYYFDSYAH…RDLDFTFELD (305 aa)) enclose the SAM-dependent MTase PRMT-type domain. Residues H111, R120, G144, 144–147 (GSGT), E166, and E195 each bind S-adenosyl-L-methionine. Catalysis depends on residues E210 and E219.

Belongs to the class I-like SAM-binding methyltransferase superfamily. Protein arginine N-methyltransferase family. PRMT8 subfamily. Homodimer. Tetramer; individual homodimers associates to form a homotetramer. Homooctamer; individual homodimers associates to form a homooctamer and homooligomerization is required for proper localization to the cell membrane.

It localises to the cell membrane. It catalyses the reaction L-arginyl-[protein] + S-adenosyl-L-methionine = N(omega)-methyl-L-arginyl-[protein] + S-adenosyl-L-homocysteine + H(+). It carries out the reaction L-arginyl-[protein] + 2 S-adenosyl-L-methionine = N(omega),N(omega)-dimethyl-L-arginyl-[protein] + 2 S-adenosyl-L-homocysteine + 2 H(+). Its function is as follows. S-adenosyl-L-methionine-dependent and membrane-associated arginine methyltransferase that can both catalyze the formation of omega-N monomethylarginine (MMA) and asymmetrical dimethylarginine (aDMA). This chain is Protein arginine N-methyltransferase 8-B (prmt8b), found in Danio rerio (Zebrafish).